The chain runs to 181 residues: Acireductone dioxygenase (181 aa).

Fe(2+) contacts are provided by H97, H99, E103, and H141. 4 residues coordinate Ni(2+): H97, H99, E103, and H141.

This sequence belongs to the acireductone dioxygenase (ARD) family. In terms of assembly, monomer. It depends on Fe(2+) as a cofactor. Ni(2+) serves as cofactor.

It catalyses the reaction 1,2-dihydroxy-5-(methylsulfanyl)pent-1-en-3-one + O2 = 3-(methylsulfanyl)propanoate + CO + formate + 2 H(+). It carries out the reaction 1,2-dihydroxy-5-(methylsulfanyl)pent-1-en-3-one + O2 = 4-methylsulfanyl-2-oxobutanoate + formate + 2 H(+). The protein operates within amino-acid biosynthesis; L-methionine biosynthesis via salvage pathway; L-methionine from S-methyl-5-thio-alpha-D-ribose 1-phosphate: step 5/6. Its function is as follows. Catalyzes 2 different reactions between oxygen and the acireductone 1,2-dihydroxy-3-keto-5-methylthiopentene (DHK-MTPene) depending upon the metal bound in the active site. Fe-containing acireductone dioxygenase (Fe-ARD) produces formate and 2-keto-4-methylthiobutyrate (KMTB), the alpha-ketoacid precursor of methionine in the methionine recycle pathway. Ni-containing acireductone dioxygenase (Ni-ARD) produces methylthiopropionate, carbon monoxide and formate, and does not lie on the methionine recycle pathway. The chain is Acireductone dioxygenase from Pseudomonas fluorescens (strain ATCC BAA-477 / NRRL B-23932 / Pf-5).